The sequence spans 314 residues: MSVQYPPQHSVLLVSSGYDHTIRFWEALSGICSRTIQHADSQVNRLCISPDKKFLAAAGNPHVRLYDINTSSQMPLMTFEGHTNNVTAIAFHCDGKWLATSSEDGTVKVWDMRAPSVQRNYDHKSPVNDLLIHPNQGELLSCDQSGRVRAWDLGENSCTHELIPEEDVPMSSITVGSDGSMLIAGNNKGNCYVWRMLNHQGASLLQPVVKFQAHQRYITRCVLSPDVKHLATCSADATVNIWSTEDMSFMLERRLQGHQRWVWDCAFSADSTYLVTASSDHVARLWELSSGETIRQYSGHHKAAVCVALNDYQI.

WD repeat units follow at residues 1–35 (MSVQ…CSRT), 38–76 (HADS…QMPL), 81–120 (GHTN…VQRN), 122–161 (DHKS…CTHE), 165–204 (EEDV…GASL), 213–252 (AHQR…FMLE), and 257–296 (GHQR…TIRQ). At S141 the chain carries Phosphoserine.

This sequence belongs to the WD repeat LST8 family. As to quaternary structure, the target of rapamycin complex 1 (TORC1) is composed of at least mip1, pop3/wat1, tco89, toc1 and tor2. The target of rapamycin complex 2 (TORC2) is composed of at least bit61, pop3/wat1, sin1, ste20 and tor1. Interacts with prp2.

Its subcellular location is the cytoplasm. The protein localises to the nucleus. Component of both TORC1 and TORC2, which regulate multiple cellular processes to control cell growth in response to environmental signals. Nutrient limitation and environmental stress signals cause inactivation of TORC1. Active TORC1 positively controls cell growth and ribosome biogenesis by regulating ribosomal protein gene expression. TORC1 negatively controls G1 cell-cycle arrest, sexual development and amino acid uptake. Represses mating, meiosis and sporulation efficiency by interfering with the functions of the transcription factor ste11 and the meiosis-promoting RNA-binding protein mei2. TORC2 is required for cell survival under various stress conditions. TORC2 positively controls G1 cell-cycle arrest, sexual development and amino acid uptake. Positively regulates amino acid uptake through the control of expression of amino acid permeases. May play a role in mRNA maturation as a coupling protein between splicing and synthesis and/or stabilization. This chain is Target of rapamycin complex subunit wat1, found in Schizosaccharomyces pombe (strain 972 / ATCC 24843) (Fission yeast).